We begin with the raw amino-acid sequence, 298 residues long: Rhodomycin D methylesterase DnrP (298 aa).

The AB hydrolase-1 domain maps to 25-277 (PLLLIAGGNL…VEIENMGHAL (253 aa)).

This sequence belongs to the methyl esterase DnrP family.

The catalysed reaction is rhodomycin D + H2O = 10-carboxy-13-deoxycarminomycin + methanol + H(+). It catalyses the reaction 4-O-methylrhodomycin D + H2O = 10-carboxy-13-deoxydaunorubicin + methanol + H(+). The protein operates within antibiotic biosynthesis; daunorubicin biosynthesis. It participates in antibiotic biosynthesis; carminomycin biosynthesis. Its function is as follows. Involved in the biosynthesis of the anthracyclines carminomycin and daunorubicin (daunomycin) which are aromatic polyketide antibiotics that exhibit high cytotoxicity and are widely applied in the chemotherapy of a variety of cancers. Catalyzes the removal of methyl group from the carbomethoxy group of rhodomycin D (10-carbomethoxy-13-deoxycarminomycin) and 4-O-methylrhodomycin D to yield 10-carboxy-13-deoxycarminomycin and 10-carboxy-13-deoxydaunorubicin, respectively. Could be also involved in the decarboxylation of 10-carboxy-13-deoxycarminomycin and 10-carboxy-13-deoxydaunorubicin to yield 13-deoxycarminomycin and 13-deoxydaunorubicin, respectively. It seems that DnrK may influence the ability of DnrP to carry out the decarboxylation. The protein is Rhodomycin D methylesterase DnrP (dnrP) of Streptomyces peucetius.